Reading from the N-terminus, the 294-residue chain is dTDP-4-dehydrorhamnose reductase (294 aa).

NADH-binding positions include glycine 11–leucine 13, aspartate 38–isoleucine 39, and alanine 62–threonine 64. NADPH-binding positions include glutamine 12 to leucine 13, aspartate 38 to isoleucine 39, and alanine 62 to threonine 64. Threonine 103–aspartate 104 contributes to the dTDP-beta-L-rhamnose binding site. Residues tyrosine 127 and lysine 131 each contribute to the NADH site. 2 residues coordinate NADPH: tyrosine 127 and lysine 131. Tyrosine 127 acts as the Proton donor/acceptor in catalysis. Position 152 (tryptophan 152) interacts with dTDP-beta-L-rhamnose.

It belongs to the dTDP-4-dehydrorhamnose reductase family. As to quaternary structure, homodimer. The cofactor is Mg(2+).

It carries out the reaction dTDP-beta-L-rhamnose + NADP(+) = dTDP-4-dehydro-beta-L-rhamnose + NADPH + H(+). The protein operates within carbohydrate biosynthesis; dTDP-L-rhamnose biosynthesis. It functions in the pathway bacterial outer membrane biogenesis; LPS O-antigen biosynthesis. Involved in the biosynthesis of the dTDP-L-rhamnose which is an important component of lipopolysaccharide (LPS). Catalyzes the reduction of dTDP-6-deoxy-L-lyxo-4-hexulose to yield dTDP-L-rhamnose. This chain is dTDP-4-dehydrorhamnose reductase, found in Aggregatibacter actinomycetemcomitans (Actinobacillus actinomycetemcomitans).